The chain runs to 456 residues: MTLPLHVLILAAGEGKRMRSSLPKVLQPLAGQPMLAHVIATARQLQPAAIHIVYGHGGDQVQAAFADQGDLQWAEQREQLGTGHAVQQAMPAIPDAATVLVLYGDVPLIRSESLLQLLHAPGRMAVLVAELANPTGYGRILRDAEGKVAAIVEQKDANDEQRRIRTINTGILTAESTALRRWLAGLSNDNAQAEFYLTDVFASAAADFTPADMVHVADPQDVEGANDPWQLAQLERAWQLRAARTLCLQGVRMADPARVEQRGSVQVGRDVQLDIDVILEGNVTLGDDVVIGPFVRLRDVTLGAGTQVRAHSDLEGVITEGAVQIGPFARLRPGTVLADGVHIGNFVETKKVTMGVGSKANHLTYLGDAVIGSKVNIGAGTITCNYDGVNKSQTTIGDGAFIGSNSALVAPIQIGANSTIGAGSVITSDAPAGQLSVTRARQTVVEGWKRPTKKSP.

Residues 1–228 (MTLPLHVLIL…PQDVEGANDP (228 aa)) are pyrophosphorylase. UDP-N-acetyl-alpha-D-glucosamine is bound by residues 10–13 (LAAG), Lys-24, Gln-76, 81–82 (GT), 103–105 (YGD), Gly-138, Glu-153, Asn-168, and Asn-226. Residue Asp-105 coordinates Mg(2+). Asn-226 contributes to the Mg(2+) binding site. The linker stretch occupies residues 229-249 (WQLAQLERAWQLRAARTLCLQ). Residues 250 to 456 (GVRMADPARV…GWKRPTKKSP (207 aa)) form an N-acetyltransferase region. Residues Arg-332 and Lys-350 each coordinate UDP-N-acetyl-alpha-D-glucosamine. The active-site Proton acceptor is the His-362. UDP-N-acetyl-alpha-D-glucosamine is bound by residues Tyr-365 and Asn-376. Acetyl-CoA-binding positions include Ala-379, 385-386 (NY), Ser-404, Ala-422, and Arg-439.

This sequence in the N-terminal section; belongs to the N-acetylglucosamine-1-phosphate uridyltransferase family. The protein in the C-terminal section; belongs to the transferase hexapeptide repeat family. In terms of assembly, homotrimer. Requires Mg(2+) as cofactor.

It localises to the cytoplasm. It carries out the reaction alpha-D-glucosamine 1-phosphate + acetyl-CoA = N-acetyl-alpha-D-glucosamine 1-phosphate + CoA + H(+). The catalysed reaction is N-acetyl-alpha-D-glucosamine 1-phosphate + UTP + H(+) = UDP-N-acetyl-alpha-D-glucosamine + diphosphate. Its pathway is nucleotide-sugar biosynthesis; UDP-N-acetyl-alpha-D-glucosamine biosynthesis; N-acetyl-alpha-D-glucosamine 1-phosphate from alpha-D-glucosamine 6-phosphate (route II): step 2/2. It functions in the pathway nucleotide-sugar biosynthesis; UDP-N-acetyl-alpha-D-glucosamine biosynthesis; UDP-N-acetyl-alpha-D-glucosamine from N-acetyl-alpha-D-glucosamine 1-phosphate: step 1/1. The protein operates within bacterial outer membrane biogenesis; LPS lipid A biosynthesis. Its function is as follows. Catalyzes the last two sequential reactions in the de novo biosynthetic pathway for UDP-N-acetylglucosamine (UDP-GlcNAc). The C-terminal domain catalyzes the transfer of acetyl group from acetyl coenzyme A to glucosamine-1-phosphate (GlcN-1-P) to produce N-acetylglucosamine-1-phosphate (GlcNAc-1-P), which is converted into UDP-GlcNAc by the transfer of uridine 5-monophosphate (from uridine 5-triphosphate), a reaction catalyzed by the N-terminal domain. This chain is Bifunctional protein GlmU, found in Xanthomonas axonopodis pv. citri (strain 306).